The sequence spans 218 residues: N-alpha-acetyltransferase 11 (218 aa).

The interaction with NAA15 stretch occupies residues 1 to 58; sequence MNIRNARPDDLMNMQHCNLLCLPENYQMKYYFYHGLSWPQLSYIAEDEDGKIVGYVLA. An N-acetyltransferase domain is found at 1 to 152; that stretch reads MNIRNARPDD…DAYAMKRDLS (152 aa). The tract at residues 175 to 218 is disordered; sequence EETQGGTLPDAGEACLPKNPTSKDSGSSDSTDVQDSSEDLDSIS. Positions 196 to 205 are enriched in low complexity; it reads SKDSGSSDST. Acidic residues predominate over residues 209–218; it reads DSSEDLDSIS.

This sequence belongs to the acetyltransferase family. ARD1 subfamily. As to quaternary structure, component of the N-terminal acetyltransferase A (NatA) complex composed of NAA11 and NAA15. Interacts with HIF1A.

The protein resides in the cytoplasm. The protein localises to the nucleus. The catalysed reaction is N-terminal glycyl-[protein] + acetyl-CoA = N-terminal N(alpha)-acetylglycyl-[protein] + CoA + H(+). It catalyses the reaction N-terminal L-alanyl-[protein] + acetyl-CoA = N-terminal N(alpha)-acetyl-L-alanyl-[protein] + CoA + H(+). It carries out the reaction N-terminal L-seryl-[protein] + acetyl-CoA = N-terminal N(alpha)-acetyl-L-seryl-[protein] + CoA + H(+). The enzyme catalyses N-terminal L-valyl-[protein] + acetyl-CoA = N-terminal N(alpha)-acetyl-L-valyl-[protein] + CoA + H(+). The catalysed reaction is N-terminal L-cysteinyl-[protein] + acetyl-CoA = N-terminal N(alpha)-acetyl-L-cysteinyl-[protein] + CoA + H(+). It catalyses the reaction N-terminal L-threonyl-[protein] + acetyl-CoA = N-terminal N(alpha)-acetyl-L-threonyl-[protein] + CoA + H(+). Displays alpha (N-terminal) acetyltransferase activity. Proposed alternative catalytic subunit of the N-terminal acetyltransferase A (NatA) complex. This is N-alpha-acetyltransferase 11 (Naa11) from Mus musculus (Mouse).